The primary structure comprises 336 residues: MTQAQNHIVPPGSKVLVTGANGYIASHIIKVLLDLGYLVQGTVRTPMPWLTEYFEKRYGSGRFELIVVSDFQQSDAFDESVKGVSGVIHVAQGLPSSTAAETVESATAYTVNGVVNLLKAASTKPTIKRVVLTSSIVAAGYPAGKGFKLDVDTWDKSLEQASKGGTTVPIYRACKVEGERQAWKWVEKNQPHFELNTVLPWLTLGKILHPNIGGSTMGYVSGLLKGDTTPFKFLPLPWFVDVEDTARLHAIALISPSVRSERLFAAATPFIWGDVIEILKRIQPNNARIPAAPVKEEPTIGDIVPAARAEKLLRETFGQRGWTPLEVSLEGGIARE.

Y171 is a binding site for NADP(+).

The protein belongs to the NAD(P)-dependent epimerase/dehydratase family. Dihydroflavonol-4-reductase subfamily.

Its pathway is secondary metabolite biosynthesis; terpenoid biosynthesis. In terms of biological role, ketoreductase; part of the gene cluster that mediates the biosynthesis of andrastins, meroterpenoid compounds that exhibit inhibitory activity against ras farnesyltransferase, suggesting that they could be promising leads for antitumor agents. The first step of the pathway is the synthesis of 3,5-dimethylorsellinic acid (DMOA) by the polyketide synthase adrD via condensation of one acetyl-CoA starter unit with 3 malonyl-CoA units and 2 methylations. DMAO is then converted to farnesyl-DMAO by the prenyltransferase adrG. The methyltransferase adrK catalyzes the methylation of the carboxyl group of farnesyl-DMAO to farnesyl-DMAO methyl ester which is further converted to epoxyfarnesyl-DMAO methyl ester by the FAD-dependent monooxygenase adrH. The terpene cyclase adrI then catalyzes the carbon skeletal rearrangement to generate the andrastin E, the first compound in the pathway having the andrastin scaffold, with the tetracyclic ring system. The post-cyclization tailoring enzymes adrF, adrE, adrJ, and adrA, are involved in the conversion of andrastin E into andrastin A. The short chain dehydrogenase adrF is responsible for the oxidation of the C-3 a hydroxyl group of andrastin E to yield the corresponding ketone, andrastin D. The ketoreductase adrE stereoselectively reduces the carbonyl moiety to reverse the stereochemistry of the C-3 position to yield andrastin F. The acetyltransferase adrJ is the acetyltransferase that attaches the acetyl group to the C-3 hydroxyl group of andrastin F to yield andrastin C. Finally, the cytochrome P450 monooxygenase adrA catalyzes two sequential oxidation reactions of the C-23 methyl group, to generate the corresponding alcohol andrastin B, and aldehyde andrastin A. This Penicillium rubens (strain ATCC 28089 / DSM 1075 / NRRL 1951 / Wisconsin 54-1255) (Penicillium chrysogenum) protein is Ketoreductase adrE.